Consider the following 184-residue polypeptide: Signal peptidase complex catalytic subunit SEC11 (184 aa).

Topologically, residues 1 to 28 (MDFIKEQYNSLVLDLRKTFRNKRDGLSH) are cytoplasmic. A helical; Signal-anchor for type II membrane protein transmembrane segment spans residues 29-49 (ILNVICLLLNALMIWKLLVVF). The Lumenal portion of the chain corresponds to 50-184 (TGCESPVVVV…MLIMILMGYE (135 aa)). Active-site charge relay system residues include Ser63, His101, and Asp127. The C-terminal short (CTS) helix stretch occupies residues 170–181 (AIVSIMLIMILM).

The protein belongs to the peptidase S26B family. In terms of assembly, component of the signal peptidase complex (SPC) composed of a catalytic subunit SEC11/SPC21 and three accessory subunits SPC25, SPC3/SPC22, SPC1/SPC12. Within the complex, interacts with SPC25. The complex induces a local thinning of the ER membrane which is used to measure the length of the signal peptide (SP) h-region of protein substrates. This ensures the selectivity of the complex towards h-regions shorter than 18-20 amino acids. The complex interacts with the SEC61 channel-forming translocon complex and is involved in the import of classical signal sequence-containing proteins. In terms of processing, phosphorylated. Phosphorylation increases catalytic activity.

The protein resides in the endoplasmic reticulum membrane. It catalyses the reaction Cleavage of hydrophobic, N-terminal signal or leader sequences from secreted and periplasmic proteins.. Phosphorylation increases catalytic activity. Ca(2+) slightly increases catalytic activity in vitro. In terms of biological role, catalytic component of the signal peptidase complex (SPC) which catalyzes the cleavage of N-terminal signal sequences from nascent proteins as they are translocated into the lumen of the endoplasmic reticulum. Specifically cleaves N-terminal signal peptides that contain a hydrophobic alpha-helix (h-region) shorter than 18-20 amino acids. The protein is Signal peptidase complex catalytic subunit SEC11 of Plasmodium falciparum (isolate 3D7).